We begin with the raw amino-acid sequence, 750 residues long: Photosystem I P700 chlorophyll a apoprotein A1 (750 aa).

Transmembrane regions (helical) follow at residues 70–93 (VFSAHFGQLSIIFLWLSGMYFHGA), 156–179 (LYCTAIGALVFAALMLFAGWFHYH), 195–219 (LNHHLAGLLGLGSLSWAGHQVHVSL), 291–309 (IAHHHLAIAILFLIAGHMY), 346–369 (WHAQLSLNLAMLGSLTIVVAHHMY), 385–411 (LSLFTHHMWIGGFLIVGAAAHAAIFMV), 433–455 (AIISHLNWVCIFLGFHSFGLYIH), and 531–549 (FLVHHIHAFTIHVTVLILL). Residues Cys-573 and Cys-582 each coordinate [4Fe-4S] cluster. The next 2 helical transmembrane spans lie at 589 to 610 (HVFLGLFWMYNAISVVIFHFSW) and 664 to 686 (LSAYGLFFLGAHFVWAFSLMFLF). Chlorophyll a' is bound at residue His-675. Residues Met-683 and Tyr-691 each coordinate chlorophyll a. Residue Trp-692 participates in phylloquinone binding. A helical transmembrane segment spans residues 724 to 744 (AVGVTHYLLGGIATTWAFFLA).

This sequence belongs to the PsaA/PsaB family. The PsaA/B heterodimer binds the P700 chlorophyll special pair and subsequent electron acceptors. PSI consists of a core antenna complex that captures photons, and an electron transfer chain that converts photonic excitation into a charge separation. The eukaryotic PSI reaction center is composed of at least 11 subunits. Requires P700 is a chlorophyll a/chlorophyll a' dimer, A0 is one or more chlorophyll a, A1 is one or both phylloquinones and FX is a shared 4Fe-4S iron-sulfur center. as cofactor.

The protein resides in the plastid. It localises to the chloroplast thylakoid membrane. The enzyme catalyses reduced [plastocyanin] + hnu + oxidized [2Fe-2S]-[ferredoxin] = oxidized [plastocyanin] + reduced [2Fe-2S]-[ferredoxin]. Functionally, psaA and PsaB bind P700, the primary electron donor of photosystem I (PSI), as well as the electron acceptors A0, A1 and FX. PSI is a plastocyanin-ferredoxin oxidoreductase, converting photonic excitation into a charge separation, which transfers an electron from the donor P700 chlorophyll pair to the spectroscopically characterized acceptors A0, A1, FX, FA and FB in turn. Oxidized P700 is reduced on the lumenal side of the thylakoid membrane by plastocyanin. This chain is Photosystem I P700 chlorophyll a apoprotein A1, found in Draba nemorosa (Woodland whitlowgrass).